Reading from the N-terminus, the 602-residue chain is Leucine-rich repeat-containing protein 40 (602 aa).

The tract at residues 1–22 (MSRLKRIAGQDPRAGFKEGGRD) is disordered. At serine 71 the chain carries Phosphoserine. LRR repeat units follow at residues 83–104 (DLTK…LRLL), 106–127 (ALTV…IREL), 129–150 (NLQK…ITNL), 152–173 (NLKC…FEQF), 175–196 (NLED…FSSL), 198–219 (SLVR…INRM), 221–242 (RLKH…LAGM), 244–265 (SLEL…PSCS), 266–286 (LLKE…EHLK), 290–311 (SILV…IILL), 313–335 (SLER…GNLH), 336–356 (LKFL…IINK), 400–421 (TLKI…VFDA), 426–447 (IITS…MVEL), 450–472 (MVSD…CVLQ), 473–494 (KLTF…VESL), 496–517 (RLQT…LYRI), 519–540 (TLET…KMKM), 543–564 (NLTT…LGNC), and 566–586 (NLRT…AILM).

This Pongo abelii (Sumatran orangutan) protein is Leucine-rich repeat-containing protein 40 (LRRC40).